The following is a 301-amino-acid chain: Acetylglutamate kinase (301 aa).

Substrate-binding positions include 76–77 (GG), arginine 98, and asparagine 192.

The protein belongs to the acetylglutamate kinase family. ArgB subfamily.

It is found in the cytoplasm. The enzyme catalyses N-acetyl-L-glutamate + ATP = N-acetyl-L-glutamyl 5-phosphate + ADP. It functions in the pathway amino-acid biosynthesis; L-arginine biosynthesis; N(2)-acetyl-L-ornithine from L-glutamate: step 2/4. Its function is as follows. Catalyzes the ATP-dependent phosphorylation of N-acetyl-L-glutamate. This Chlorobaculum parvum (strain DSM 263 / NCIMB 8327) (Chlorobium vibrioforme subsp. thiosulfatophilum) protein is Acetylglutamate kinase.